Here is a 53-residue protein sequence, read N- to C-terminus: Ferredoxin B (53 aa).

Residues 1-35 (GIDPNYRSLPVVKEEQGVKIYGTYEPPTKLGIWGT) are N-terminal extension. Lys-29 is subject to N6-methyllysine. Positions 34–53 (GTIVGVDFDLCIADGSCINA) constitute a 4Fe-4S ferredoxin-type 1 domain. Cys-44 and Cys-50 together coordinate [3Fe-4S] cluster.

It depends on [3Fe-4S] cluster as a cofactor. [4Fe-4S] cluster serves as cofactor.

In terms of biological role, ferredoxins are iron-sulfur proteins that transfer electrons in a wide variety of metabolic reactions. This is Ferredoxin B from Sulfuracidifex metallicus (Sulfolobus metallicus).